A 70-amino-acid chain; its full sequence is Small ribosomal subunit protein bS18c (70 aa).

This sequence belongs to the bacterial ribosomal protein bS18 family. As to quaternary structure, part of the 30S ribosomal subunit.

The protein localises to the plastid. The protein resides in the chloroplast. The chain is Small ribosomal subunit protein bS18c from Pyropia yezoensis (Susabi-nori).